We begin with the raw amino-acid sequence, 429 residues long: Probable M18 family aminopeptidase 2 (429 aa).

Residues His-82, His-156, and His-401 each coordinate Zn(2+).

Belongs to the peptidase M18 family. Zn(2+) is required as a cofactor.

The sequence is that of Probable M18 family aminopeptidase 2 from Stutzerimonas stutzeri (strain A1501) (Pseudomonas stutzeri).